We begin with the raw amino-acid sequence, 457 residues long: Succinate-semialdehyde dehydrogenase [NADP(+)] 1 (457 aa).

209-214 (GSEPAG) provides a ligand contact to NADP(+). Catalysis depends on residues glutamate 231 and cysteine 265.

This sequence belongs to the aldehyde dehydrogenase family.

The enzyme catalyses succinate semialdehyde + NAD(+) + H2O = succinate + NADH + 2 H(+). It carries out the reaction succinate semialdehyde + NADP(+) + H2O = succinate + NADPH + 2 H(+). Its function is as follows. Catalyzes the NADP(+)-dependent oxidation of succinate semialdehyde to succinate. It is believed to be the main source of succinate semialdehyde dehydrogenase activity in Mycobacterium. In Mycobacterium bovis (strain ATCC BAA-935 / AF2122/97), this protein is Succinate-semialdehyde dehydrogenase [NADP(+)] 1 (gabD1).